The primary structure comprises 331 residues: Anthranilate phosphoribosyltransferase (331 aa).

5-phospho-alpha-D-ribose 1-diphosphate-binding positions include glycine 79, 82 to 83, threonine 87, 89 to 92, 107 to 115, and alanine 119; these read GD, NIST, and KHGNYGATS. Glycine 79 contacts anthranilate. Serine 91 is a Mg(2+) binding site. Asparagine 110 lines the anthranilate pocket. Arginine 165 is a binding site for anthranilate. 2 residues coordinate Mg(2+): aspartate 223 and glutamate 224.

It belongs to the anthranilate phosphoribosyltransferase family. In terms of assembly, homodimer. It depends on Mg(2+) as a cofactor.

It carries out the reaction N-(5-phospho-beta-D-ribosyl)anthranilate + diphosphate = 5-phospho-alpha-D-ribose 1-diphosphate + anthranilate. It functions in the pathway amino-acid biosynthesis; L-tryptophan biosynthesis; L-tryptophan from chorismate: step 2/5. Catalyzes the transfer of the phosphoribosyl group of 5-phosphorylribose-1-pyrophosphate (PRPP) to anthranilate to yield N-(5'-phosphoribosyl)-anthranilate (PRA). The chain is Anthranilate phosphoribosyltransferase from Bacteroides fragilis (strain ATCC 25285 / DSM 2151 / CCUG 4856 / JCM 11019 / LMG 10263 / NCTC 9343 / Onslow / VPI 2553 / EN-2).